The sequence spans 111 residues: Probable U2 small nuclear ribonucleoprotein B'' (111 aa).

Positions 4–83 constitute an RRM domain; it reads NTLYVNNLND…KEMKIQYAHS (80 aa).

In terms of assembly, belongs to the 40S cdc5-associated complex (or cwf complex), a spliceosome sub-complex reminiscent of a late-stage spliceosome composed of the U2, U5 and U6 snRNAs and at least brr2, cdc5, cwf2/prp3, cwf3/syf1, cwf4/syf3, cwf5/ecm2, spp42/cwf6, cwf7/spf27, cwf8, cwf9, cwf10, cwf11, cwf12, prp45/cwf13, cwf14, cwf15, cwf16, cwf17, cwf18, cwf19, cwf20, cwf21, cwf22, cwf23, cwf24, cwf25, cwf26, cyp7/cwf27, cwf28, cwf29/ist3, lea1, msl1, prp5/cwf1, prp10, prp12/sap130, prp17, prp22, sap61, sap62, sap114, sap145, slu7, smb1, smd1, smd3, smf1, smg1 and syf2.

The protein localises to the nucleus. Involved in pre-mRNA splicing. This protein is associated with snRNP U2. It binds stem loop IV of U2 snRNA. This chain is Probable U2 small nuclear ribonucleoprotein B'' (msl1), found in Schizosaccharomyces pombe (strain 972 / ATCC 24843) (Fission yeast).